Here is a 330-residue protein sequence, read N- to C-terminus: Cathepsin K (330 aa).

An N-terminal signal peptide occupies residues methionine 1 to alanine 16. Positions leucine 17–arginine 115 are cleaved as a propeptide — activation peptide. The N-linked (GlcNAc...) asparagine glycan is linked to asparagine 104. Intrachain disulfides connect cysteine 137/cysteine 178, cysteine 171/cysteine 211, and cysteine 270/cysteine 319. Cysteine 140 is an active-site residue. Residues histidine 277 and asparagine 297 contribute to the active site.

Belongs to the peptidase C1 family.

It is found in the lysosome. Its subcellular location is the secreted. It localises to the apical cell membrane. The catalysed reaction is Broad proteolytic activity. With small-molecule substrates and inhibitors, the major determinant of specificity is P2, which is preferably Leu, Met &gt; Phe, and not Arg.. In terms of biological role, thiol protease involved in osteoclastic bone resorption and may participate partially in the disorder of bone remodeling. Displays potent endoprotease activity against fibrinogen at acid pH. May play an important role in extracellular matrix degradation. Involved in the release of thyroid hormone thyroxine (T4) by limited proteolysis of TG/thyroglobulin in the thyroid follicle lumen. The sequence is that of Cathepsin K (CTSK) from Canis lupus familiaris (Dog).